The primary structure comprises 599 residues: Elongation factor 4 (599 aa).

One can recognise a tr-type G domain in the interval 5 to 187; the sequence is SHIRNFSIIA…RLVTAIPAPE (183 aa). GTP-binding positions include 17-22 and 134-137; these read DHGKST and NKMD.

The protein belongs to the TRAFAC class translation factor GTPase superfamily. Classic translation factor GTPase family. LepA subfamily.

The protein localises to the cell inner membrane. It catalyses the reaction GTP + H2O = GDP + phosphate + H(+). Functionally, required for accurate and efficient protein synthesis under certain stress conditions. May act as a fidelity factor of the translation reaction, by catalyzing a one-codon backward translocation of tRNAs on improperly translocated ribosomes. Back-translocation proceeds from a post-translocation (POST) complex to a pre-translocation (PRE) complex, thus giving elongation factor G a second chance to translocate the tRNAs correctly. Binds to ribosomes in a GTP-dependent manner. This Pseudomonas aeruginosa (strain LESB58) protein is Elongation factor 4.